The sequence spans 328 residues: Phosphate acyltransferase (328 aa).

Belongs to the PlsX family. As to quaternary structure, homodimer. Probably interacts with PlsY.

Its subcellular location is the cytoplasm. The catalysed reaction is a fatty acyl-[ACP] + phosphate = an acyl phosphate + holo-[ACP]. Its pathway is lipid metabolism; phospholipid metabolism. In terms of biological role, catalyzes the reversible formation of acyl-phosphate (acyl-PO(4)) from acyl-[acyl-carrier-protein] (acyl-ACP). This enzyme utilizes acyl-ACP as fatty acyl donor, but not acyl-CoA. The polypeptide is Phosphate acyltransferase (Mycoplasmoides gallisepticum (strain R(low / passage 15 / clone 2)) (Mycoplasma gallisepticum)).